Here is a 535-residue protein sequence, read N- to C-terminus: Flavin-containing monooxygenase 1 (535 aa).

Ala-2 carries the post-translational modification N-acetylalanine. The Lumenal segment spans residues 2-513 (AKRVAIVGAG…TRIVQESSSP (512 aa)). Residues 9–13 (GAGVS), Glu-32, 40–41 (LW), and 61–62 (NS) each bind FAD. NADP(+)-binding positions include 60 to 61 (SN) and 195 to 198 (SGTD). Residues 514 to 534 (FESLLKLFAVLALLVSVFLIF) form a helical membrane-spanning segment. Position 535 (Leu-535) is a topological domain, cytoplasmic.

This sequence belongs to the FMO family. FAD is required as a cofactor. Liver.

The protein resides in the endoplasmic reticulum membrane. It carries out the reaction hypotaurine + NADPH + O2 + H(+) = taurine + NADP(+) + H2O. It catalyses the reaction hypotaurine + NADH + O2 + H(+) = taurine + NAD(+) + H2O. The enzyme catalyses trimethylamine + NADPH + O2 = trimethylamine N-oxide + NADP(+) + H2O. The catalysed reaction is N,N-dimethylaniline + NADPH + O2 + H(+) = N,N-dimethylaniline N-oxide + NADP(+) + H2O. In terms of biological role, broad spectrum monooxygenase that catalyzes the oxygenation of a wide variety of nitrogen- and sulfur-containing compounds including xenobiotics. Catalyzes the S-oxygenation of hypotaurine to produce taurine, an organic osmolyte involved in cell volume regulation as well as a variety of cytoprotective and developmental processes. In vitro, catalyzes the N-oxygenation of trimethylamine (TMA) to produce trimethylamine N-oxide (TMAO) and could therefore participate to the detoxification of this compound that is generated by the action of gut microbiota from dietary precursors such as choline, choline containing compounds, betaine or L-carnitine. This Oryctolagus cuniculus (Rabbit) protein is Flavin-containing monooxygenase 1 (FMO1).